A 138-amino-acid polypeptide reads, in one-letter code: Cysteine desulfuration protein SufE (138 aa).

Catalysis depends on C51, which acts as the Cysteine persulfide intermediate.

Belongs to the SufE family. Homodimer. Interacts with SufS.

The protein resides in the cytoplasm. Its pathway is cofactor biosynthesis; iron-sulfur cluster biosynthesis. In terms of biological role, participates in cysteine desulfuration mediated by SufS. Cysteine desulfuration mobilizes sulfur from L-cysteine to yield L-alanine and constitutes an essential step in sulfur metabolism for biosynthesis of a variety of sulfur-containing biomolecules. Functions as a sulfur acceptor for SufS, by mediating the direct transfer of the sulfur atom from the S-sulfanylcysteine of SufS, an intermediate product of cysteine desulfuration process. The protein is Cysteine desulfuration protein SufE of Salmonella choleraesuis (strain SC-B67).